The primary structure comprises 440 residues: P47(GAG-CRK) protein (440 aa).

The gag first part stretch occupies residues methionine 1–alanine 208. The PPXY motif signature appears at proline 174–tyrosine 177. Residues tyrosine 183–alanine 230 form a disordered region. Positions glycine 209–threonine 437 are CRK. Basic residues predominate over residues alanine 212 to alanine 221. Residues tryptophan 248 to valine 354 form the SH2 domain. One can recognise an SH3 domain in the interval glutamate 368 to proline 428. The tract at residues glycine 438–arginine 440 is gag second part.

This is P47(GAG-CRK) protein from Avian sarcoma virus CT10 (Avian sarcoma virus (strain CT10)).